The following is a 962-amino-acid chain: IQ motif and SEC7 domain-containing protein 1 (962 aa).

The disordered stretch occupies residues 1–96 (MACRRRYLSS…STSVLRKQAE (96 aa)). A compositionally biased stretch (low complexity) spans 8 to 19 (LSSLETGSSLST). Positions 30–39 (SSETGTSLDS) are enriched in polar residues. A phosphoserine mark is found at Ser89, Ser105, and Ser107. One can recognise an IQ domain in the interval 134 to 163 (TRHAARTIQTAFRQYQMNKNFERLRSSMSE). Phosphoserine is present on residues Ser180, Ser248, and Ser252. Disordered stretches follow at residues 264 to 292 (SEEV…HRKL), 311 to 333 (LSPP…DLRL), and 348 to 516 (KEDK…DSPA). Residues 273–292 (ARARDTEPKPGLHGMDHRKL) are compositionally biased toward basic and acidic residues. Basic and acidic residues-rich tracts occupy residues 365–375 (ERPEPRLRVEH) and 429–445 (LPRE…RPLE). Over residues 470–488 (DSINSTSNSNDTINCSSES) the composition is skewed to low complexity. Ser511 and Ser514 each carry phosphoserine. The SEC7 domain maps to 516–709 (AFSNDVIRKR…IGIYERIRKR (194 aa)). Residues 773–865 (HQREIFLFND…LRESVAEVQE (93 aa)) enclose the PH domain. Phosphoserine is present on Ser891. Position 910 is a phosphotyrosine (Tyr910). A disordered region spans residues 921–962 (LSSSLRDLSEAGKRGRRSSAGSLESNVEFQPFQPSQPPVLCS). Phosphoserine occurs at positions 923 and 924. Positions 939–948 (SAGSLESNVE) are enriched in polar residues.

Belongs to the BRAG family. In terms of assembly, interacts with ARF1 and ARF6. Interacts with GRIA2; the interaction is required for ARF6 activation.

The protein localises to the cytoplasm. It localises to the nucleus. The protein resides in the postsynaptic density. Its subcellular location is the cytoplasmic vesicle. It is found in the secretory vesicle. The protein localises to the synaptic vesicle. Functionally, guanine nucleotide exchange factor for ARF1 and ARF6. Guanine nucleotide exchange factor activity is enhanced by lipid binding. Accelerates GTP binding by ARFs of all three classes. Guanine nucleotide exchange protein for ARF6, mediating internalization of beta-1 integrin. Involved in neuronal development. In neurons, plays a role in the control of vesicle formation by endocytoc cargo. Upon long term depression, interacts with GRIA2 and mediates the activation of ARF6 to internalize synaptic AMPAR receptors. The protein is IQ motif and SEC7 domain-containing protein 1 of Rattus norvegicus (Rat).